A 162-amino-acid chain; its full sequence is Protein mmf1, mitochondrial (162 aa).

Belongs to the RutC family.

The protein resides in the mitochondrion. It is found in the cytoplasm. Plays a role in the maintenance of mitochondrial DNA. This chain is Protein mmf1, mitochondrial (mmf1), found in Schizosaccharomyces pombe (strain 972 / ATCC 24843) (Fission yeast).